Consider the following 557-residue polypeptide: Urocanate hydratase (557 aa).

The tract at residues 1 to 20 (MSNPRHNEREVRSPRGDELN) is disordered. NAD(+)-binding positions include 52–53 (GG), glutamine 130, 176–178 (GMG), glutamate 196, arginine 201, 242–243 (NA), 263–267 (QTSAH), 273–274 (YL), and tyrosine 322. Cysteine 410 is a catalytic residue. Glycine 492 lines the NAD(+) pocket.

Belongs to the urocanase family. The cofactor is NAD(+).

It localises to the cytoplasm. The enzyme catalyses 4-imidazolone-5-propanoate = trans-urocanate + H2O. It participates in amino-acid degradation; L-histidine degradation into L-glutamate; N-formimidoyl-L-glutamate from L-histidine: step 2/3. Functionally, catalyzes the conversion of urocanate to 4-imidazolone-5-propionate. This is Urocanate hydratase from Brucella canis (strain ATCC 23365 / NCTC 10854 / RM-666).